We begin with the raw amino-acid sequence, 466 residues long: L-seryl-tRNA(Sec) selenium transferase (466 aa).

Lysine 292 is subject to N6-(pyridoxal phosphate)lysine.

The protein belongs to the SelA family. It depends on pyridoxal 5'-phosphate as a cofactor.

It is found in the cytoplasm. It carries out the reaction L-seryl-tRNA(Sec) + selenophosphate + H(+) = L-selenocysteinyl-tRNA(Sec) + phosphate. Its pathway is aminoacyl-tRNA biosynthesis; selenocysteinyl-tRNA(Sec) biosynthesis; selenocysteinyl-tRNA(Sec) from L-seryl-tRNA(Sec) (bacterial route): step 1/1. Its function is as follows. Converts seryl-tRNA(Sec) to selenocysteinyl-tRNA(Sec) required for selenoprotein biosynthesis. The chain is L-seryl-tRNA(Sec) selenium transferase from Rhizobium meliloti (strain 1021) (Ensifer meliloti).